A 178-amino-acid chain; its full sequence is Anthranilate synthase component 2 (178 aa).

Residues 1–178 (MIVVVDCKDS…RNFVEMCHDG (178 aa)) enclose the Glutamine amidotransferase type-1 domain. Residue 49–51 (GPG) coordinates L-glutamine. C71 functions as the Nucleophile; for GATase activity in the catalytic mechanism. Residues Q75 and 120–121 (SL) each bind L-glutamine. Residues H155 and E157 each act as for GATase activity in the active site.

Heterotetramer consisting of two non-identical subunits: a beta subunit (TrpG) and a large alpha subunit (TrpE).

The enzyme catalyses chorismate + L-glutamine = anthranilate + pyruvate + L-glutamate + H(+). It participates in amino-acid biosynthesis; L-tryptophan biosynthesis; L-tryptophan from chorismate: step 1/5. In terms of biological role, part of a heterotetrameric complex that catalyzes the two-step biosynthesis of anthranilate, an intermediate in the biosynthesis of L-tryptophan. In the first step, the glutamine-binding beta subunit (TrpG) of anthranilate synthase (AS) provides the glutamine amidotransferase activity which generates ammonia as a substrate that, along with chorismate, is used in the second step, catalyzed by the large alpha subunit of AS (TrpE) to produce anthranilate. In the absence of TrpG, TrpE can synthesize anthranilate directly from chorismate and high concentrations of ammonia. In Archaeoglobus fulgidus (strain ATCC 49558 / DSM 4304 / JCM 9628 / NBRC 100126 / VC-16), this protein is Anthranilate synthase component 2 (trpG).